A 143-amino-acid polypeptide reads, in one-letter code: MAREYSRVDRIGDQMQRELAQLIQREVKDPRVGMVTVNDVKVSRDLGYADIYISLLSTEELTEDSPEVQDSLTVLNKASGFLRGQVGRAMKLRVVPHLRFHFDKLLGQSRKMDRLIREAVGDKPAVPRDDNDDPVSDNPERDA.

Residues 119-129 (AVGDKPAVPRD) show a composition bias toward basic and acidic residues. Residues 119–143 (AVGDKPAVPRDDNDDPVSDNPERDA) are disordered.

This sequence belongs to the RbfA family. As to quaternary structure, monomer. Binds 30S ribosomal subunits, but not 50S ribosomal subunits or 70S ribosomes.

The protein localises to the cytoplasm. In terms of biological role, one of several proteins that assist in the late maturation steps of the functional core of the 30S ribosomal subunit. Associates with free 30S ribosomal subunits (but not with 30S subunits that are part of 70S ribosomes or polysomes). Required for efficient processing of 16S rRNA. May interact with the 5'-terminal helix region of 16S rRNA. The polypeptide is Ribosome-binding factor A (Marinobacter nauticus (strain ATCC 700491 / DSM 11845 / VT8) (Marinobacter aquaeolei)).